The sequence spans 134 residues: D-ribose pyranase (134 aa).

The active-site Proton donor is the His-20. Residues Asp-28, His-101, and 123 to 125 (YSN) contribute to the substrate site.

The protein belongs to the RbsD / FucU family. RbsD subfamily. In terms of assembly, homodecamer.

Its subcellular location is the cytoplasm. It catalyses the reaction beta-D-ribopyranose = beta-D-ribofuranose. It participates in carbohydrate metabolism; D-ribose degradation; D-ribose 5-phosphate from beta-D-ribopyranose: step 1/2. Functionally, catalyzes the interconversion of beta-pyran and beta-furan forms of D-ribose. The protein is D-ribose pyranase of Pseudomonas syringae pv. syringae (strain B728a).